The primary structure comprises 483 residues: 5-hydroxytryptamine receptor 3A (483 aa).

Positions 1 to 23 (MPLCIPQVLLALFLSVLIAQGEG) are cleaved as a signal peptide. Over 24–246 (SRRRATQAHS…MKFYVVIRRR (223 aa)) the chain is Extracellular. Residues Asn109, Asn175, and Asn191 are each glycosylated (N-linked (GlcNAc...) asparagine). Cys162 and Cys176 are disulfide-bonded. The helical transmembrane segment at 247 to 273 (PLFYAVSLLLPSIFLMVVDIVGFCLPP) threads the bilayer. Residues 274 to 278 (DSGER) are Cytoplasmic-facing. Residues 279 to 297 (VSFKITLLLGYSVFLIIVS) traverse the membrane as a helical segment. Residues 298–307 (DTLPATAIGT) are Extracellular-facing. Residues 308–326 (PLIGVYFVVCMALLVISLA) form a helical membrane-spanning segment. Topologically, residues 327–460 (ETIFIVQLVH…GYVLDRLLFR (134 aa)) are cytoplasmic. Residues 393-414 (VGSPQDLEKTSRSRDSPLPPPR) form a disordered region. Residues 398 to 407 (DLEKTSRSRD) are compositionally biased toward basic and acidic residues. Positions 419–455 (AVRGLLQELSSIRHSLEKRDEMREVARDWLRVGYVLD) are HA-stretch; determines single-channel conductance in 5-HT3 receptors. A helical transmembrane segment spans residues 461-480 (IYLLAVLAYSITLVTLWSIW). Residues 481-483 (HYS) are Extracellular-facing.

The protein belongs to the ligand-gated ion channel (TC 1.A.9) family. 5-hydroxytryptamine receptor (TC 1.A.9.2) subfamily. HTR3A sub-subfamily. In terms of assembly, forms homopentameric as well as heteropentameric serotonin-activated cation-selective channel complexes with HTR3B or HTR3C or HTR3D or HTR3E. The homomeric complex is functional but exhibits low conductance with modified voltage dependence, and decreased agonist and antagonist affinity. Heteropentameric complexes display properties which resemble that of neuronal serotonin-activated channels in vivo. Interacts with RIC3. In terms of tissue distribution, expressed in central and peripheral neurons.

It localises to the postsynaptic cell membrane. The protein resides in the cell membrane. It catalyses the reaction Na(+)(in) = Na(+)(out). The enzyme catalyses K(+)(in) = K(+)(out). It carries out the reaction Ca(2+)(in) = Ca(2+)(out). The catalysed reaction is Mg(2+)(in) = Mg(2+)(out). In terms of biological role, forms serotonin (5-hydroxytryptamine/5-HT3)-activated cation-selective channel complexes, which when activated cause fast, depolarizing responses in neurons. The protein is 5-hydroxytryptamine receptor 3A of Rattus norvegicus (Rat).